Consider the following 229-residue polypeptide: Large ribosomal subunit protein uL1 (229 aa).

It belongs to the universal ribosomal protein uL1 family. As to quaternary structure, part of the 50S ribosomal subunit.

Binds directly to 23S rRNA. The L1 stalk is quite mobile in the ribosome, and is involved in E site tRNA release. In terms of biological role, protein L1 is also a translational repressor protein, it controls the translation of the L11 operon by binding to its mRNA. In Rhodopseudomonas palustris (strain HaA2), this protein is Large ribosomal subunit protein uL1.